Reading from the N-terminus, the 655-residue chain is A-type voltage-gated potassium channel KCND3 (655 aa).

Residues M1–A182 lie on the Cytoplasmic side of the membrane. Residues A6–P21 form an interaction with KCNIP1 and KCNIP2 region. The tract at residues E70 to D78 is interaction with KCNIP1. Positions 104, 110, 131, and 132 each coordinate Zn(2+). The residue at position 153 (S153) is a Phosphoserine. A helical transmembrane segment spans residues L183–T204. Topologically, residues V205–S223 are extracellular. Residues V224–F246 traverse the membrane as a helical segment. The Cytoplasmic segment spans residues A247–R253. Residues F254 to T277 form a helical membrane-spanning segment. The Extracellular portion of the chain corresponds to N278–S283. A helical; Voltage-sensor transmembrane segment spans residues G284–G306. Residues L307 to A318 lie on the Cytoplasmic side of the membrane. A helical transmembrane segment spans residues S319–E343. Residues K344–T352 lie on the Extracellular side of the membrane. An intramembrane region (helical) is located at residues S353 to T366. T367, L368, G369, and Y370 together coordinate K(+). The short motif at T367–D372 is the Selectivity filter element. An intramembrane segment occupies T367–V374. The helical transmembrane segment at I378–P400 threads the bilayer. The Cytoplasmic portion of the chain corresponds to V401–L655. Phosphothreonine is present on T459. Positions S470–T487 are interaction with KCNIP1 and KCNIP2. The segment at I472–T487 is mediates dendritic targeting. Residues S523–T565 are disordered. Residues P529–S548 are compositionally biased toward low complexity. S569 and S585 each carry phosphoserine. Residues I615–L655 are disordered. Polar residues predominate over residues G637–L655.

It belongs to the potassium channel family. D (Shal) (TC 1.A.1.2) subfamily. Kv4.3/KCND3 sub-subfamily. As to quaternary structure, homotetramer. Heterotetramer with KCND2. Associates with the regulatory subunit KCNIP3. Associates with the regulatory subunit KCNIP4. Interacts with KCNE1, KCNE2, SCN1B and KCNAB1 and DLG1. Component of heteromultimeric potassium channels. Identified in potassium channel complexes containing KCND1, KCND2, KCND3, KCNIP1, KCNIP2, KCNIP3, KCNIP4, DPP6 and DPP10. Interacts with KCNIP1; each KCNIP1 monomer interacts with two adjacent KCND3 subunits, through both the N-terminal inactivation ball of a KCND3 subunit and a C-terminal helix from the adjacent KCND3 subunit, clamping them together; this interaction stabilizes the tetrameric form and modulates the channel gating kinetics namely channel activation and inactivation kinetics and rate of recovery from inactivation. Interacts with DPP6; this interaction modulates the channel gating kinetics namely channel activation and inactivation kinetics and rate of recovery from inactivation. Interacts with KCNIP2; each KCNIP2 monomer interacts with two adjacent KCND3 subunits, through both the N-terminal inactivation ball of a KCND3 subunit and a C-terminal helix from the adjacent KCND3 subunit, clamping them together; this interaction modulates the channel gating kinetics. Regulated through phosphorylation at Ser-569 by CaMK2D.

The protein localises to the cell membrane. Its subcellular location is the sarcolemma. It localises to the cell projection. The protein resides in the dendrite. The enzyme catalyses K(+)(in) = K(+)(out). Functionally, pore-forming (alpha) subunit of voltage-gated A-type potassium channels that mediates transmembrane potassium transport in excitable membranes, in brain and heart. In cardiomyocytes, may generate the transient outward potassium current I(To). In neurons, may conduct the transient subthreshold somatodendritic A-type potassium current (ISA). Kinetics properties are characterized by fast activation at subthreshold membrane potentials, rapid inactivation, and quick recovery from inactivation. Channel properties are modulated by interactions with regulatory subunits. Interaction with the regulatory subunits KCNIP1 or KCNIP2 modulates the channel gating kinetics namely channel activation and inactivation kinetics and rate of recovery from inactivation. Likewise, interaction with DPP6 modulates the channel gating kinetics namely channel activation and inactivation kinetics. In Mus musculus (Mouse), this protein is A-type voltage-gated potassium channel KCND3.